The chain runs to 108 residues: Holo-[acyl-carrier-protein] synthase (108 aa).

Mg(2+) contacts are provided by aspartate 9 and glutamate 54.

This sequence belongs to the P-Pant transferase superfamily. AcpS family. Mg(2+) serves as cofactor.

The protein localises to the cytoplasm. The catalysed reaction is apo-[ACP] + CoA = holo-[ACP] + adenosine 3',5'-bisphosphate + H(+). Functionally, transfers the 4'-phosphopantetheine moiety from coenzyme A to a Ser of acyl-carrier-protein. The sequence is that of Holo-[acyl-carrier-protein] synthase from Mycoplasmopsis pulmonis (strain UAB CTIP) (Mycoplasma pulmonis).